A 1378-amino-acid chain; its full sequence is Attractin-like protein 1 (1378 aa).

The first 51 residues, 1 to 51, serve as a signal peptide directing secretion; that stretch reads MEPGVRARSGAPQPASPVLWRARPAGGGGASSWLLLDGNSWLLCYGFLYLA. An EGF-like 1 domain is found at 52 to 90; sequence LYAQVSQSKPCERTGSCFSGRCVNSTCLCDPGWVGDQCQ. At 52–1229 the chain is on the extracellular side; sequence LYAQVSQSKP…FSQHNTIMDL (1178 aa). Intrachain disulfides connect C62-C78, C80-C89, and C92-C118. N75 is a glycosylation site (N-linked (GlcNAc...) asparagine). The region spanning 92-208 is the CUB domain; sequence CQGRFKLTEP…TGFNIFYSIN (117 aa). N-linked (GlcNAc...) asparagine glycans are attached at residues N173 and N197. An EGF-like 2 domain is found at 206-244; it reads SINSCPNNCSGHGKCTTSVSVASQVYCECDKYWKGEACD. 3 disulfides stabilise this stretch: C210/C220, C214/C232, and C234/C243. Kelch repeat units follow at residues 315–364, 366–414, 426–474, 479–530, 532–590, and 591–637; these read FMWV…LYQE, IFMY…EGHS, VMIV…SVYD, SIYV…LING, MLIF…VING, and SMYI…WNKN. The N-linked (GlcNAc...) asparagine glycan is linked to N379. PSI domains lie at 613–656, 665–708, and 714–759; these read NCKA…AKCP, RCYR…TKCH, and ICNK…DACL. N-linked (GlcNAc...) asparagine glycosylation is present at N703. The 119-residue stretch at 754-872 folds into the C-type lectin domain; sequence VGDACLRINS…TSMADGLVCE (119 aa). An intrachain disulfide couples C775 to C871. N-linked (GlcNAc...) asparagine glycans are attached at residues N777 and N897. PSI domains lie at 888 to 938 and 941 to 1011; these read PCSL…ATCS and NCSG…IQCP. 8 disulfide bridges follow: C1013/C1021, C1015/C1027, C1030/C1039, C1042/C1056, C1059/C1068, C1061/C1075, C1077/C1087, and C1090/C1105. Laminin EGF-like domains lie at 1013–1058 and 1059–1107; these read CQCN…QCTA and CTCG…TCYY. The N-linked (GlcNAc...) asparagine glycan is linked to N1156. The helical transmembrane segment at 1230–1250 threads the bilayer; the sequence is VQFFVTFFSCFLSLLLVAAVV. At 1251 to 1378 the chain is on the cytoplasmic side; that stretch reads WKIKQTCWAS…HLSTRQGTCV (128 aa). The interval 1287-1324 is interaction with MC4R; it reads VGAEQTDFLRGPLEGAPKPIAIEPCAGNRAAVLTVFLC. The interval 1351-1378 is disordered; sequence QQKPSDNKDKTSGVRNRKHLSTRQGTCV.

In terms of assembly, interacts with MC4R. As to expression, highly expressed in brain, heart, lung, kidney and liver. In the central nervous system, it is highly expressed in the dentate gyrus, CA1-3 regions of the hippocampus, and the ventral taenia tecta.

It localises to the cell membrane. Its function is as follows. May play a role in melanocortin signaling pathways that regulate energy homeostasis. The protein is Attractin-like protein 1 (Atrnl1) of Mus musculus (Mouse).